The following is a 245-amino-acid chain: Uridylate kinase (245 aa).

Position 12 to 15 (12 to 15) interacts with ATP; it reads KISG. Glycine 55 serves as a coordination point for UMP. Positions 56 and 60 each coordinate ATP. UMP is bound by residues aspartate 76 and 137–144; that span reads AGAPYLTT. 3 residues coordinate ATP: threonine 164, tyrosine 171, and aspartate 174.

Belongs to the UMP kinase family. As to quaternary structure, homohexamer.

Its subcellular location is the cytoplasm. The catalysed reaction is UMP + ATP = UDP + ADP. The protein operates within pyrimidine metabolism; CTP biosynthesis via de novo pathway; UDP from UMP (UMPK route): step 1/1. Its activity is regulated as follows. Inhibited by UTP. Its function is as follows. Catalyzes the reversible phosphorylation of UMP to UDP. The chain is Uridylate kinase from Chlamydia trachomatis serovar D (strain ATCC VR-885 / DSM 19411 / UW-3/Cx).